Reading from the N-terminus, the 248-residue chain is Probable transcriptional regulatory protein PFL_4766 (248 aa).

The protein belongs to the TACO1 family.

The protein localises to the cytoplasm. The polypeptide is Probable transcriptional regulatory protein PFL_4766 (Pseudomonas fluorescens (strain ATCC BAA-477 / NRRL B-23932 / Pf-5)).